The chain runs to 343 residues: Succinylglutamate desuccinylase (343 aa).

Zn(2+)-binding residues include His-60, Glu-63, and His-157. Residue Glu-221 is part of the active site.

It belongs to the AspA/AstE family. Succinylglutamate desuccinylase subfamily. Zn(2+) serves as cofactor.

It catalyses the reaction N-succinyl-L-glutamate + H2O = L-glutamate + succinate. The protein operates within amino-acid degradation; L-arginine degradation via AST pathway; L-glutamate and succinate from L-arginine: step 5/5. Functionally, transforms N(2)-succinylglutamate into succinate and glutamate. The chain is Succinylglutamate desuccinylase from Idiomarina loihiensis (strain ATCC BAA-735 / DSM 15497 / L2-TR).